The primary structure comprises 277 residues: Putative thiosulfate sulfurtransferase (277 aa).

Rhodanese domains are found at residues 18-125 (KAPK…PLSA) and 154-274 (AIGT…APIE). Lysine 67 is covalently cross-linked (Isoglutamyl lysine isopeptide (Lys-Gln) (interchain with Q-Cter in protein Pup)). Catalysis depends on cysteine 233, which acts as the Cysteine persulfide intermediate. Residue arginine 238 coordinates substrate.

It catalyses the reaction thiosulfate + hydrogen cyanide = thiocyanate + sulfite + 2 H(+). Functionally, may be a sulfotransferase involved in the formation of thiosulfate. The sequence is that of Putative thiosulfate sulfurtransferase from Mycolicibacterium smegmatis (strain ATCC 700084 / mc(2)155) (Mycobacterium smegmatis).